We begin with the raw amino-acid sequence, 581 residues long: Proline--tRNA ligase (581 aa).

The protein belongs to the class-II aminoacyl-tRNA synthetase family. ProS type 1 subfamily. Homodimer.

The protein resides in the cytoplasm. The catalysed reaction is tRNA(Pro) + L-proline + ATP = L-prolyl-tRNA(Pro) + AMP + diphosphate. In terms of biological role, catalyzes the attachment of proline to tRNA(Pro) in a two-step reaction: proline is first activated by ATP to form Pro-AMP and then transferred to the acceptor end of tRNA(Pro). As ProRS can inadvertently accommodate and process non-cognate amino acids such as alanine and cysteine, to avoid such errors it has two additional distinct editing activities against alanine. One activity is designated as 'pretransfer' editing and involves the tRNA(Pro)-independent hydrolysis of activated Ala-AMP. The other activity is designated 'posttransfer' editing and involves deacylation of mischarged Ala-tRNA(Pro). The misacylated Cys-tRNA(Pro) is not edited by ProRS. In Acidovorax ebreus (strain TPSY) (Diaphorobacter sp. (strain TPSY)), this protein is Proline--tRNA ligase.